Consider the following 108-residue polypeptide: Large ribosomal subunit protein bL21c (108 aa).

It belongs to the bacterial ribosomal protein bL21 family. In terms of assembly, part of the 50S ribosomal subunit.

It is found in the plastid. The protein resides in the chloroplast. Its function is as follows. This protein binds to 23S rRNA. This is Large ribosomal subunit protein bL21c from Cyanidium caldarium (Red alga).